The chain runs to 469 residues: Calcium-binding mitochondrial carrier protein SCaMC-2-B (469 aa).

Residues 1-189 (MLCLCLYVPV…EKNTGMWWRH (189 aa)) lie on the Mitochondrial intermembrane side of the membrane. EF-hand domains lie at 47–80 (SYRK…RDHE), 78–113 (DHEK…LGVH), and 114–149 (ISEE…HPAE). Residues Asp-60, Asp-62, Asp-64, Gln-66, and Glu-71 each contribute to the Ca(2+) site. Solcar repeat units lie at residues 184 to 270 (GMWW…IKRL), 278 to 363 (LGIL…LKNS), and 375 to 463 (PGVF…LKIT). A helical membrane pass occupies residues 190–207 (LVAGGGAGAVSRTCTAPL). The Mitochondrial matrix portion of the chain corresponds to 208–244 (DRLKVLMQVHATRSNSMGIAGGFTQMIREGGLRSLWR). A helical transmembrane segment spans residues 245-264 (GNGINVLKIAPESAIKFMAY). Residues 265 to 287 (EQIKRLIGSNQETLGILERLVSG) lie on the Mitochondrial intermembrane side of the membrane. A helical membrane pass occupies residues 288-301 (SLAGAIAQSSIYPM). The Mitochondrial matrix portion of the chain corresponds to 302 to 337 (EVLKTRLALGRTGQYSGIADCAKHIFKKEGMTAFYK). A helical membrane pass occupies residues 338–357 (GYIPNMLGIIPYAGIDLAVY). Topologically, residues 358-380 (ETLKNSWLQRFATDSADPGVFVL) are mitochondrial intermembrane. The chain crosses the membrane as a helical span at residues 381–398 (LACGTMSSTCGQLASYPL). The Mitochondrial matrix segment spans residues 399–437 (ALVRTRMQAQASQEGSPQMTMSGLFRHIVRTEGAIGLYR). The helical transmembrane segment at 438–457 (GLAPNFMKVIPAVSISYVVY) threads the bilayer. At 458-469 (ENLKITLGVQSR) the chain is on the mitochondrial intermembrane side.

The protein belongs to the mitochondrial carrier (TC 2.A.29) family.

It is found in the mitochondrion inner membrane. Functionally, calcium-dependent mitochondrial solute carrier. The protein is Calcium-binding mitochondrial carrier protein SCaMC-2-B (slc25a25b) of Danio rerio (Zebrafish).